Here is a 269-residue protein sequence, read N- to C-terminus: 23S rRNA (adenosine(1067)-2'-O)-methyltransferase (269 aa).

The S-adenosyl-L-methionine site is built by arginine 135, arginine 165, leucine 195, glycine 218, isoleucine 238, and leucine 247.

This sequence belongs to the class IV-like SAM-binding methyltransferase superfamily. RNA methyltransferase TsnR/AvirB family. In terms of assembly, homodimer.

It catalyses the reaction adenosine(1067) in 23S rRNA + S-adenosyl-L-methionine = 2'-O-methyladenosine(1067) in 23S rRNA + S-adenosyl-L-homocysteine + H(+). Functionally, specifically methylates the adenosine-1067 in 23S ribosomal RNA. Confers resistance to antibiotic thiostrepton. The sequence is that of 23S rRNA (adenosine(1067)-2'-O)-methyltransferase (tsnR) from Streptomyces azureus.